The following is a 486-amino-acid chain: Patatin-like phospholipase domain-containing protein 2 (486 aa).

Residues 1-8 (MFPRETKW) lie on the Cytoplasmic side of the membrane. The helical transmembrane segment at 9-29 (NISFAGCGFLGVYHIGVASCL) threads the bilayer. Residues 10 to 179 (ISFAGCGFLG…SDNLPLYELK (170 aa)) form the PNPLA domain. Residues 14-19 (GCGFLG) carry the GXGXXG motif. The Extracellular portion of the chain corresponds to 30 to 42 (REHAPFLVANATH). An N-linked (GlcNAc...) asparagine glycan is attached at N39. A helical transmembrane segment spans residues 43–63 (IYGASAGALTATALVTGACLG). Residues 45 to 49 (GASAG) carry the GXSXG motif. S47 acts as the Nucleophile in catalysis. Residues 64–137 (EAGANIIEVS…IISHFSSKDE (74 aa)) are Cytoplasmic-facing. K92 participates in a covalent cross-link: Glycyl lysine isopeptide (Lys-Gly) (interchain with G-Cter in ubiquitin). A helical transmembrane segment spans residues 138 to 158 (LIQANVCSTFIPVYCGLIPPT). Residues 159–331 (LQGVRYVDGG…TTLSNMLPVR (173 aa)) lie on the Extracellular side of the membrane. D166 serves as the catalytic Proton acceptor. Positions 166 to 168 (DGG) match the DGA/G motif. Residues 332 to 352 (LATAMMVPYTLPLESAVSFTI) traverse the membrane as a helical segment. At 353-486 (RLLEWLPDVP…PQDPPGLPPC (134 aa)) the chain is on the cytoplasmic side. S374 carries the phosphoserine; in vitro modification. S396 and S406 each carry phosphoserine; by PKA. Residues S430 and S468 each carry the phosphoserine; in vitro modification. Residues 465 to 476 (APASPTAADPAT) show a composition bias toward low complexity. A disordered region spans residues 465–486 (APASPTAADPATPQDPPGLPPC). Residues 477-486 (PQDPPGLPPC) are compositionally biased toward pro residues.

Interacts with ABHD5; this association stimulates PNPLA2 triglyceride hydrolase activity. Interacts with SERPINF1; this interaction stimulates the phospholipase A2 activity of PNPLA2. Despite a colocalization in lipid droplets, it probably does not interact with PLIN. Interacts with PLIN5; prevents interaction with ABHD5. Interacts with FAF2. In terms of processing, phosphorylation at Ser-406 by PKA is increased during fasting and moderate intensity exercise, and moderately increases lipolytic activity. Ubiquitinated by PEX2 in response to reactive oxygen species (ROS), leading to its degradation. Ubiquitination is stimulated by LDAH. Expressed at high levels in white and brown adipose tissue, and to a lesser degree in testis and cardiac muscle. Barely detected in liver, spleen, thymus, kidney, skeletal muscle, and brain. Among the white adipose depots, gonadal fat showed the highest level of expression compared with inguinal and renal white adipose tissues.

It is found in the lipid droplet. It localises to the cell membrane. Its subcellular location is the cytoplasm. It carries out the reaction a triacylglycerol + H2O = a diacylglycerol + a fatty acid + H(+). The catalysed reaction is a triacylglycerol + H2O = a 1,2-diacylglycerol + a fatty acid + H(+). The enzyme catalyses a triacylglycerol + H2O = a 1,3-diacylglycerol + a fatty acid + H(+). It catalyses the reaction a triacyl-sn-glycerol + H2O = a 2,3-diacyl-sn-glycerol + a fatty acid + H(+). It carries out the reaction a triacyl-sn-glycerol + H2O = a 1,3-diacyl-sn-glycerol + a fatty acid + H(+). The catalysed reaction is 1,2,3-tri-(9Z-octadecenoyl)-glycerol + H2O = 1,3-di-(9Z-octadecenoyl)-glycerol + (9Z)-octadecenoate + H(+). The enzyme catalyses 1,2,3-tri-(9Z)-hexadecenoylglycerol + H2O = 1,3-di-(9Z)-hexadecenoylglycerol + (9Z)-hexadecenoate + H(+). It catalyses the reaction 1,2,3-tri-(9Z,12Z)-octadecadienoylglycerol + H2O = 1,3-di-(9Z,12Z)-octadecadienoylglycerol + (9Z,12Z)-octadecadienoate + H(+). It carries out the reaction 1,2,3-tri-(9Z,12Z,15Z)-octadecatrienoylglycerol + H2O = 1,3-di-(9Z,12Z,15Z)-octadecatrienoylglycerol + (9Z,12Z,15Z)-octadecatrienoate + H(+). The catalysed reaction is 1,3-di-(9Z)-octadecenoyl-2-hexadecanoylglycerol + H2O = 1,3-di-(9Z-octadecenoyl)-glycerol + hexadecanoate + H(+). The enzyme catalyses 1,2-di-(9Z)-octadecenoyl-3-hexadecanoyl-sn-glycerol + H2O = 1-(9Z)-octadecenoyl-3-hexadecanoyl-sn-glycerol + (9Z)-octadecenoate + H(+). It catalyses the reaction 1-hexadecanoyl-2,3-di-(9Z)-octadecenoyl-sn-glycerol + H2O = 1-hexadecanoyl-3-(9Z)-octadecenoyl-sn-glycerol + (9Z)-octadecenoate + H(+). It carries out the reaction 1,2,3-tri-(9Z-octadecenoyl)-glycerol + H2O = 2,3-di-(9Z)-octadecenoyl-sn-glycerol + (9Z)-octadecenoate + H(+). The catalysed reaction is 1,2,3-tri-(9Z)-hexadecenoylglycerol + H2O = 2,3-di-(9Z)-hexadecenoyl-sn-glycerol + (9Z)-hexadecenoate + H(+). The enzyme catalyses 1,2,3-tri-(9Z,12Z)-octadecadienoylglycerol + H2O = 2,3-di-(9Z,12Z)-octadecadienoyl-sn-glycerol + (9Z,12Z)-octadecadienoate + H(+). It catalyses the reaction 1,2,3-tri-(9Z,12Z,15Z)-octadecatrienoylglycerol + H2O = 2,3-di-(9Z,12Z,15Z)-octadecatrienoyl-sn-glycerol + (9Z,12Z,15Z)-octadecatrienoate + H(+). It carries out the reaction 1,3-di-(9Z)-octadecenoyl-2-hexadecanoylglycerol + H2O = 2-hexadecanoyl-3-(9Z)-octadecenoyl-sn-glycerol + (9Z)-octadecenoate + H(+). The catalysed reaction is 1-hexadecanoyl-2,3-di-(9Z)-octadecenoyl-sn-glycerol + H2O = 2,3-di-(9Z)-octadecenoyl-sn-glycerol + hexadecanoate + H(+). The enzyme catalyses 1,2-di-(9Z)-octadecenoyl-3-hexadecanoyl-sn-glycerol + H2O = 2-(9Z-octadecenoyl)-3-hexadecanoyl-sn-glycerol + (9Z)-octadecenoate + H(+). It catalyses the reaction 1,2-di-(9Z-octadecenoyl)-glycerol + (9Z)-octadecenoate + H(+) = 1,2,3-tri-(9Z-octadecenoyl)-glycerol + H2O. It carries out the reaction a 1-acylglycerol + a 1,3-diacylglycerol = a triacylglycerol + glycerol. The catalysed reaction is a 1-acylglycerol + a 1,2-diacylglycerol = a triacylglycerol + glycerol. The enzyme catalyses 2 a 1-acylglycerol = a 1,2-diacylglycerol + glycerol. It catalyses the reaction a triacylglycerol + all-trans-retinol = an all-trans-retinyl ester + a diacylglycerol. It carries out the reaction 1-(9Z-octadecenoyl)-glycerol + 1,3-di-(9Z-octadecenoyl)-glycerol = 1,2,3-tri-(9Z-octadecenoyl)-glycerol + glycerol. The catalysed reaction is 1-(9Z-octadecenoyl)-glycerol + 1,2-di-(9Z-octadecenoyl)-glycerol = 1,2,3-tri-(9Z-octadecenoyl)-glycerol + glycerol. The enzyme catalyses 2 1-(9Z-octadecenoyl)-glycerol = 1,2-di-(9Z-octadecenoyl)-glycerol + glycerol. It catalyses the reaction 1,2,3-tri-(9Z-octadecenoyl)-glycerol + all-trans-retinol = all-trans-retinyl 9Z-octadecenoate + di-(9Z)-octadecenoylglycerol. It carries out the reaction a 1,2-diacyl-sn-glycero-3-phosphocholine + H2O = a 1-acyl-sn-glycero-3-phosphocholine + a fatty acid + H(+). The catalysed reaction is 1,2,3-tri-(9Z-octadecenoyl)-glycerol + 9-hydroxy-octadecanoate = 9-(9Z-octadecenoyloxy)-octadecanoate + 2,3-di-(9Z)-octadecenoyl-sn-glycerol. The enzyme catalyses 1-hexadecanoyl-2,3-di-(9Z)-octadecenoyl-sn-glycerol + 9-hydroxy-octadecanoate = 9-hexadecanoyloxy-octadecanoate + 2,3-di-(9Z)-octadecenoyl-sn-glycerol. It catalyses the reaction 1,2,3-tri-(10Z)-heptadecenoylglycerol + 9-hydroxy-octadecanoate = 2,3-di-(10Z-heptadecenoyl)-sn-glycerol + 9-(10Z-heptadecenoyloxy)-octadecanoate. It carries out the reaction 1,2,3-tri-(9Z,12Z)-octadecadienoylglycerol + 9-hydroxy-octadecanoate = 2,3-di-(9Z,12Z)-octadecadienoyl-sn-glycerol + 9-(9Z,12Z-octadecadienoyloxy)-octadecanoate. The catalysed reaction is 1,2,3-tri-(9Z)-hexadecenoylglycerol + 9-hydroxy-octadecanoate = 2,3-di-(9Z)-hexadecenoyl-sn-glycerol + 9-(9Z-hexadecenoyloxy)-octadecanoate. The enzyme catalyses 9-hydroxy-octadecanoate + 1,2-di-(9Z-octadecenoyl)-sn-glycerol = 9-(9Z-octadecenoyloxy)-octadecanoate + 2-(9Z-octadecenoyl)-glycerol. It catalyses the reaction 1-hexadecanoyl-2,3-di-(9Z)-octadecenoyl-sn-glycerol + 9-hydroxy-octadecanoate = 1-hexadecanoyl-3-(9Z)-octadecenoyl-sn-glycerol + 9-(9Z-octadecenoyloxy)-octadecanoate. It participates in glycerolipid metabolism; triacylglycerol degradation. Stimulated by PKA-dependent PLIN phosphorylation. Functionally, catalyzes the initial step in triglyceride hydrolysis in adipocyte and non-adipocyte lipid droplets. Exhibits a strong preference for the hydrolysis of long-chain fatty acid esters at the sn-2 position of the glycerol backbone and acts coordinately with LIPE/HLS and DGAT2 within the lipolytic cascade. Also possesses acylglycerol transacylase and phospholipase A2 activities. Transfers fatty acid from triglyceride to retinol, hydrolyzes retinylesters, and generates 1,3-diacylglycerol from triglycerides. Regulates adiposome size and may be involved in the degradation of adiposomes. Catalyzes the formation of an ester bond between hydroxy fatty acids and fatty acids derived from triglycerides or diglycerides to generate fatty acid esters of hydroxy fatty acids (FAHFAs) in adipocytes. Acts antagonistically with LDAH in regulation of cellular lipid stores. Inhibits LDAH-stimulated lipid droplet fusion. May play an important role in energy homeostasis. May play a role in the response of the organism to starvation, enhancing hydrolysis of triglycerides and providing free fatty acids to other tissues to be oxidized in situations of energy depletion. The chain is Patatin-like phospholipase domain-containing protein 2 from Mus musculus (Mouse).